Here is a 389-residue protein sequence, read N- to C-terminus: Succinate--CoA ligase [ADP-forming] subunit beta (389 aa).

Residues 9-236 (RDLFEAHGVP…ERTEDPLEAK (228 aa)) enclose the ATP-grasp domain. ATP-binding positions include Lys-45, 52 to 54 (GRG), Ala-94, and Glu-99. Residues Asn-191 and Asp-205 each contribute to the Mg(2+) site. Substrate-binding positions include Asn-256 and 318 to 320 (GIT).

The protein belongs to the succinate/malate CoA ligase beta subunit family. As to quaternary structure, heterotetramer of two alpha and two beta subunits. Mg(2+) serves as cofactor.

It catalyses the reaction succinate + ATP + CoA = succinyl-CoA + ADP + phosphate. It carries out the reaction GTP + succinate + CoA = succinyl-CoA + GDP + phosphate. Its pathway is carbohydrate metabolism; tricarboxylic acid cycle; succinate from succinyl-CoA (ligase route): step 1/1. Functionally, succinyl-CoA synthetase functions in the citric acid cycle (TCA), coupling the hydrolysis of succinyl-CoA to the synthesis of either ATP or GTP and thus represents the only step of substrate-level phosphorylation in the TCA. The beta subunit provides nucleotide specificity of the enzyme and binds the substrate succinate, while the binding sites for coenzyme A and phosphate are found in the alpha subunit. This is Succinate--CoA ligase [ADP-forming] subunit beta from Micrococcus luteus (strain ATCC 4698 / DSM 20030 / JCM 1464 / CCM 169 / CCUG 5858 / IAM 1056 / NBRC 3333 / NCIMB 9278 / NCTC 2665 / VKM Ac-2230) (Micrococcus lysodeikticus).